Consider the following 509-residue polypeptide: Pyruvate kinase (509 aa).

Ser29 bears the Phosphoserine mark. Substrate is bound at residue Arg56. K(+) is bound by residues Asn58 and Ser60. 58-61 (NFSH) is an ATP binding site. The residue at position 63 (Ser63) is a Phosphoserine. Positions 91 and 92 each coordinate K(+). Arg98 and Lys184 together coordinate ATP. Glu249 contributes to the Mg(2+) binding site. Gly272 and Asp273 together coordinate substrate. Mg(2+) is bound at residue Asp273. A Phosphoserine modification is found at Ser281. Thr305 serves as a coordination point for substrate. A Phosphoserine modification is found at Ser412.

Belongs to the pyruvate kinase family. As to quaternary structure, homotetramer. Mg(2+) is required as a cofactor. Requires K(+) as cofactor.

The enzyme catalyses pyruvate + ATP = phosphoenolpyruvate + ADP + H(+). The protein operates within carbohydrate degradation; glycolysis; pyruvate from D-glyceraldehyde 3-phosphate: step 5/5. This is Pyruvate kinase (pyk1) from Schizosaccharomyces pombe (strain 972 / ATCC 24843) (Fission yeast).